The sequence spans 214 residues: Ras-related protein Rab-17 (214 aa).

Ser-29 carries the post-translational modification Phosphoserine. GTP is bound by residues Gly-31, Lys-32, Thr-33, and Thr-50. The Mg(2+) site is built by Thr-33, Thr-50, and Asp-73. Positions 43 to 54 match the Switch 1 motif; sequence DFSNVLPTVGCA. The Switch 2 signature appears at 75 to 91; sequence AGQEKYQSVCHLYFRGA. GTP is bound by residues Gly-76, Asn-132, Lys-133, Asp-135, and Ala-163. Positions 183 to 204 are disordered; the sequence is RAGDTGSSRPQEGEAVALNQEP. S-geranylgeranyl cysteine attachment occurs at residues Cys-211 and Cys-212.

Belongs to the small GTPase superfamily. Rab family. Mg(2+) is required as a cofactor. In terms of tissue distribution, expressed in kidney, liver, and intestine mainly by epithelial cells. Expressed in hippocampus (at protein level).

It localises to the recycling endosome membrane. The protein resides in the melanosome. It is found in the cell projection. Its subcellular location is the dendrite. The catalysed reaction is GTP + H2O = GDP + phosphate + H(+). Regulated by guanine nucleotide exchange factors (GEFs) which promote the exchange of bound GDP for free GTP. Regulated by GTPase activating proteins (GAPs) which increase the GTP hydrolysis activity. Inhibited by GDP dissociation inhibitors (GDIs). In terms of biological role, the small GTPases Rab are key regulators of intracellular membrane trafficking, from the formation of transport vesicles to their fusion with membranes. Rabs cycle between an inactive GDP-bound form and an active GTP-bound form that is able to recruit to membranes different set of downstream effectors directly responsible for vesicle formation, movement, tethering and fusion. RAB17 is involved in transcytosis, the directed movement of endocytosed material through the cell and its exocytosis from the plasma membrane at the opposite side. Mainly observed in epithelial cells, transcytosis mediates, for instance, the transcellular transport of immunoglobulins from the basolateral surface to the apical surface. Most probably controls membrane trafficking through apical recycling endosomes in a post-endocytic step of transcytosis. Required for melanosome transport and release from melanocytes, it also regulates dendrite and dendritic spine development. May also play a role in cell migration. This is Ras-related protein Rab-17 from Mus musculus (Mouse).